The following is a 275-amino-acid chain: 3-methyl-2-oxobutanoate hydroxymethyltransferase (275 aa).

Positions 44 and 83 each coordinate Mg(2+). Residues 44 to 45 (DS), Asp83, and Lys113 contribute to the 3-methyl-2-oxobutanoate site. Glu115 is a Mg(2+) binding site. Residue Glu182 is the Proton acceptor of the active site.

It belongs to the PanB family. Homodecamer; pentamer of dimers. It depends on Mg(2+) as a cofactor.

It localises to the cytoplasm. It catalyses the reaction 3-methyl-2-oxobutanoate + (6R)-5,10-methylene-5,6,7,8-tetrahydrofolate + H2O = 2-dehydropantoate + (6S)-5,6,7,8-tetrahydrofolate. Its pathway is cofactor biosynthesis; (R)-pantothenate biosynthesis; (R)-pantoate from 3-methyl-2-oxobutanoate: step 1/2. Its function is as follows. Catalyzes the reversible reaction in which hydroxymethyl group from 5,10-methylenetetrahydrofolate is transferred onto alpha-ketoisovalerate to form ketopantoate. The polypeptide is 3-methyl-2-oxobutanoate hydroxymethyltransferase (Clostridioides difficile (strain 630) (Peptoclostridium difficile)).